Consider the following 300-residue polypeptide: Protein SPEAR2 (300 aa).

The segment covering 1–11 (MCSNNNTSSGS) has biased composition (polar residues). The tract at residues 1-64 (MCSNNNTSSG…PPLSSSPSLP (64 aa)) is disordered. Residues 25-38 (CRKKQKKDKVRRRG) show a composition bias toward basic residues. The SPL motif lies at 37–45 (RGPGVAELE). Over residues 43–54 (ELEKIRLQEEYK) the composition is skewed to basic and acidic residues. Residues 55–64 (PPLSSSPSLP) show a composition bias toward low complexity. Positions 294-300 (IDLNLKL) match the EAR motif.

In terms of assembly, homodimer and heterodimer with SPL and SPEARs. Interacts with SPL, SPEAR1, SPEAR3 and SPEAR4. In terms of tissue distribution, expressed in leaves.

In terms of biological role, adapter-like transcriptional repressor recruiting TPL/TPR corepressors to inhibit TCP transcription factors. May be involved in leaf development. This is Protein SPEAR2 from Arabidopsis thaliana (Mouse-ear cress).